The primary structure comprises 191 residues: Phosphopantetheine adenylyltransferase (191 aa).

Serine 8 lines the substrate pocket. ATP-binding positions include 8–9 and histidine 16; that span reads SF. Positions 40, 72, and 86 each coordinate substrate. Residues 87–89, glutamate 97, and 122–128 each bind ATP; these read GLR and YSFLSSS.

Belongs to the bacterial CoaD family. Homohexamer. The cofactor is Mg(2+).

It is found in the cytoplasm. It catalyses the reaction (R)-4'-phosphopantetheine + ATP + H(+) = 3'-dephospho-CoA + diphosphate. It participates in cofactor biosynthesis; coenzyme A biosynthesis; CoA from (R)-pantothenate: step 4/5. Its function is as follows. Reversibly transfers an adenylyl group from ATP to 4'-phosphopantetheine, yielding dephospho-CoA (dPCoA) and pyrophosphate. The protein is Phosphopantetheine adenylyltransferase of Nostoc sp. (strain PCC 7120 / SAG 25.82 / UTEX 2576).